Here is a 414-residue protein sequence, read N- to C-terminus: Phosphopentomutase (414 aa).

Mn(2+) contacts are provided by aspartate 10, aspartate 309, histidine 314, aspartate 350, histidine 351, and histidine 362.

This sequence belongs to the phosphopentomutase family. The cofactor is Mn(2+).

The protein localises to the cytoplasm. The catalysed reaction is 2-deoxy-alpha-D-ribose 1-phosphate = 2-deoxy-D-ribose 5-phosphate. It catalyses the reaction alpha-D-ribose 1-phosphate = D-ribose 5-phosphate. It participates in carbohydrate degradation; 2-deoxy-D-ribose 1-phosphate degradation; D-glyceraldehyde 3-phosphate and acetaldehyde from 2-deoxy-alpha-D-ribose 1-phosphate: step 1/2. Isomerase that catalyzes the conversion of deoxy-ribose 1-phosphate (dRib-1-P) and ribose 1-phosphate (Rib-1-P) to deoxy-ribose 5-phosphate (dRib-5-P) and ribose 5-phosphate (Rib-5-P), respectively. The protein is Phosphopentomutase of Hahella chejuensis (strain KCTC 2396).